Consider the following 233-residue polypeptide: MAKLTKRMRVIREKVDATKAYDINEAITLLKELATAKFVESVDVAVNLGVDPRKSDQNVRGAIVLPHGTGRDVRVAVFTQGANAEAAKEAGAELVGMEDLAEQVKAGEMNFDVVIASPDAMRVVGMLGQILGPRGLMPNPKTGTVTPNVAEAVKNAKAGQVRYRNDKNGIIHTTIGKVDFDSVKLKENLEALLVALKKQKPAAAKGQYVKKVSISTTMGAGVAVDQNTLEATA.

Belongs to the universal ribosomal protein uL1 family. As to quaternary structure, part of the 50S ribosomal subunit.

Binds directly to 23S rRNA. The L1 stalk is quite mobile in the ribosome, and is involved in E site tRNA release. In terms of biological role, protein L1 is also a translational repressor protein, it controls the translation of the L11 operon by binding to its mRNA. The polypeptide is Large ribosomal subunit protein uL1 (Shewanella amazonensis (strain ATCC BAA-1098 / SB2B)).